The sequence spans 31 residues: Cytochrome b6-f complex subunit 6 (31 aa).

The helical transmembrane segment at 3–23 (TITSYFGFLLAALTITPALFI) threads the bilayer.

It belongs to the PetL family. The 4 large subunits of the cytochrome b6-f complex are cytochrome b6, subunit IV (17 kDa polypeptide, PetD), cytochrome f and the Rieske protein, while the 4 small subunits are PetG, PetL, PetM and PetN. The complex functions as a dimer.

The protein resides in the plastid. It localises to the chloroplast thylakoid membrane. Component of the cytochrome b6-f complex, which mediates electron transfer between photosystem II (PSII) and photosystem I (PSI), cyclic electron flow around PSI, and state transitions. PetL is important for photoautotrophic growth as well as for electron transfer efficiency and stability of the cytochrome b6-f complex. The polypeptide is Cytochrome b6-f complex subunit 6 (Zea mays (Maize)).